The following is a 219-amino-acid chain: Interleukin-12 subunit alpha (219 aa).

The N-terminal stretch at 1–22 (MCPARSLLLVATLVLLDHLSLA) is a signal peptide. Intrachain disulfides connect C37/C110, C64/C196, and C85/C123. N-linked (GlcNAc...) asparagine glycans are attached at residues N93 and N107.

This sequence belongs to the IL-6 superfamily. As to quaternary structure, heterodimer with IL12B; disulfide-linked. This heterodimer is known as interleukin IL-12. Heterodimer with EBI3/IL27B; not disulfide-linked. This heterodimer is known as interleukin IL-35. Interacts with NBR1; this interaction promotes IL-12 secretion.

It localises to the secreted. Its function is as follows. Heterodimerizes with IL12B to form the IL-12 cytokine or with EBI3/IL27B to form the IL-35 cytokine. IL-12 is primarily produced by professional antigen-presenting cells (APCs) such as B-cells and dendritic cells (DCs) as well as macrophages and granulocytes and regulates T-cell and natural killer-cell responses, induces the production of interferon-gamma (IFN-gamma), favors the differentiation of T-helper 1 (Th1) cells and is an important link between innate resistance and adaptive immunity. Mechanistically, exerts its biological effects through a receptor composed of IL12R1 and IL12R2 subunits. Binding to the receptor results in the rapid tyrosine phosphorylation of a number of cellular substrates including the JAK family kinases TYK2 and JAK2. In turn, recruited STAT4 gets phosphorylated and translocates to the nucleus where it regulates cytokine/growth factor responsive genes. As part of IL-35, plays essential roles in maintaining the immune homeostasis of the liver microenvironment and also functions as an immune-suppressive cytokine. Mediates biological events through unconventional receptors composed of IL12RB2 and gp130/IL6ST heterodimers or homodimers. Signaling requires the transcription factors STAT1 and STAT4, which form a unique heterodimer that binds to distinct DNA sites. In Homo sapiens (Human), this protein is Interleukin-12 subunit alpha (IL12A).